Reading from the N-terminus, the 86-residue chain is Anti-adapter protein IraP (86 aa).

Residues 1-38 (MKNLIAELLVKLAQKEEEAKELTVQVEALEIVVTALLR) adopt a coiled-coil conformation.

This sequence belongs to the IraP family. Interacts with RssB.

It localises to the cytoplasm. In terms of biological role, inhibits RpoS proteolysis by regulating RssB activity, thereby increasing the stability of the sigma stress factor RpoS especially during phosphate starvation, but also in stationary phase and during nitrogen starvation. Its effect on RpoS stability is due to its interaction with RssB, which probably blocks the interaction of RssB with RpoS, and the consequent delivery of the RssB-RpoS complex to the ClpXP protein degradation pathway. The chain is Anti-adapter protein IraP from Klebsiella pneumoniae subsp. pneumoniae (strain ATCC 700721 / MGH 78578).